Reading from the N-terminus, the 427-residue chain is Cryptic catabolic NAD-specific glutamate dehydrogenase GudB (427 aa).

Residues Lys-80 and Lys-107 each coordinate substrate. Lys-119 (proton donor) is an active-site residue. 2 residues coordinate NAD(+): Thr-203 and Asn-234. Ser-361 contacts substrate.

The protein belongs to the Glu/Leu/Phe/Val dehydrogenases family. In terms of assembly, homohexamer.

The catalysed reaction is L-glutamate + NAD(+) + H2O = 2-oxoglutarate + NH4(+) + NADH + H(+). Its function is as follows. GudB seems to be intrinsically inactive, however spontaneous mutations removing a 9-bp direct repeat within the wild-type gudB sequence activated the GudB protein and allowed more-efficient utilization of amino acids of the glutamate family (called gutB1). This 3 amino acid insertion presumably causes severe destabilization of the fold of the protein, leading to an inactive enzyme that is very quickly degraded. The cryptic GudB serves as a buffer that may compensate for mutations in the rocG gene and that can also be decryptified for the utilization of glutamate as a single carbon source in the absence of arginine. It is unable to synthesize glutamate. This is Cryptic catabolic NAD-specific glutamate dehydrogenase GudB from Bacillus subtilis (strain 168).